A 529-amino-acid chain; its full sequence is Nuclear distribution protein PAC1 (529 aa).

Residues 68 to 89 adopt a coiled-coil conformation; that stretch reads RLQHKIIDLEGEVSNLRTVIDS. WD repeat units follow at residues 120 to 159, 165 to 218, 221 to 261, 264 to 318, 321 to 395, 416 to 455, and 496 to 529; these read QSHQLVQSVSIHPALPIILGGCSDGSLIIWNLVNDESLIP, AHIR…HIRT, GHEH…CIKT, GHSD…GLSL, GHTH…FRPH, GHQSWVKSLHIHPNGRFVFSGSDDKTIKIWDLSSLNVNGR, and TEEDRRNELMKSIESKIRCLFISGGVDNCIRLWS.

The protein belongs to the WD repeat LIS1/nudF family. In terms of assembly, self-associates. Interacts with NDL1 and dynein.

The protein localises to the cytoplasm. It is found in the cytoskeleton. Its subcellular location is the spindle pole. Its function is as follows. Positively regulates the activity of the minus-end directed microtubule motor protein dynein. Plays a central role in positioning the mitotic spindle at the bud neck during cell division. Targets cytoplasmic dynein to microtubule plus ends, thereby promoting dynein-mediated microtubule sliding along the bud cortex and consequently the movement of the mitotic spindle to the bud neck. This chain is Nuclear distribution protein PAC1, found in Debaryomyces hansenii (strain ATCC 36239 / CBS 767 / BCRC 21394 / JCM 1990 / NBRC 0083 / IGC 2968) (Yeast).